The primary structure comprises 230 residues: Demethylmenaquinone methyltransferase (230 aa).

Residues Thr57, Asp77, 101-102, and Ser118 each bind S-adenosyl-L-methionine; that span reads DI.

It belongs to the class I-like SAM-binding methyltransferase superfamily. MenG/UbiE family.

The enzyme catalyses a 2-demethylmenaquinol + S-adenosyl-L-methionine = a menaquinol + S-adenosyl-L-homocysteine + H(+). It participates in quinol/quinone metabolism; menaquinone biosynthesis; menaquinol from 1,4-dihydroxy-2-naphthoate: step 2/2. In terms of biological role, methyltransferase required for the conversion of demethylmenaquinol (DMKH2) to menaquinol (MKH2). The chain is Demethylmenaquinone methyltransferase from Chlamydia felis (strain Fe/C-56) (Chlamydophila felis).